Consider the following 390-residue polypeptide: Multidrug export protein EmrA (390 aa).

At 1–24 (MSANAETQTPQQPVKKSGKRKRLL) the chain is on the cytoplasmic side. Residues 25–45 (LLLTLLFIIIAVAIGIYWFLV) form a helical membrane-spanning segment. Residues 46–390 (LRHFEETDDA…IDDIVKANAG (345 aa)) are Periplasmic-facing. Residues 120 to 180 (INSKQLQANI…QAQLDVAIQQ (61 aa)) adopt a coiled-coil conformation.

Belongs to the membrane fusion protein (MFP) (TC 8.A.1) family. Homodimer and homotrimer. Part of the tripartite efflux system EmrAB-TolC, which is composed of an inner membrane transporter, EmrB, a periplasmic membrane fusion protein, EmrA, and an outer membrane component, TolC. The complex forms a large protein conduit and can translocate molecules across both the inner and outer membranes. Interacts with EmrB. EmrAB complex forms a dimer in vitro.

The protein resides in the cell inner membrane. Functionally, part of the tripartite efflux system EmrAB-TolC, which confers resistance to antibiotics such as CCCP, FCCP, 2,4-dinitrophenol and nalidixic acid. EmrA is a drug-binding protein that provides a physical link between EmrB and TolC. This chain is Multidrug export protein EmrA (emrA), found in Escherichia coli (strain K12).